The following is a 239-amino-acid chain: Fatty acid metabolism regulator protein (239 aa).

The 69-residue stretch at 6-74 (QSPAGFAEEY…HGKPTKVNNF (69 aa)) folds into the HTH gntR-type domain. The H-T-H motif DNA-binding region spans 34-53 (ERELSELIGVTRTTLREVLQ).

In terms of assembly, homodimer.

It localises to the cytoplasm. Functionally, multifunctional regulator of fatty acid metabolism. This chain is Fatty acid metabolism regulator protein, found in Enterobacter sp. (strain 638).